The primary structure comprises 78 residues: Exodeoxyribonuclease 7 small subunit (78 aa).

The protein belongs to the XseB family. Heterooligomer composed of large and small subunits.

It is found in the cytoplasm. It carries out the reaction Exonucleolytic cleavage in either 5'- to 3'- or 3'- to 5'-direction to yield nucleoside 5'-phosphates.. Bidirectionally degrades single-stranded DNA into large acid-insoluble oligonucleotides, which are then degraded further into small acid-soluble oligonucleotides. This Idiomarina loihiensis (strain ATCC BAA-735 / DSM 15497 / L2-TR) protein is Exodeoxyribonuclease 7 small subunit.